The sequence spans 159 residues: Nucleotide-binding protein Avin_13410 (159 aa).

Belongs to the YajQ family.

Nucleotide-binding protein. The protein is Nucleotide-binding protein Avin_13410 of Azotobacter vinelandii (strain DJ / ATCC BAA-1303).